We begin with the raw amino-acid sequence, 348 residues long: Rhodopsin (348 aa).

Topologically, residues 1 to 33 (TEGPYFYVPMVNTTGIVRSPYEYPQYYLVNPAA) are extracellular. Residue asparagine 12 is glycosylated (N-linked (GlcNAc...) asparagine). Residues 34-58 (FAILGAYMFFLIIVGFPVNFMTLYV) traverse the membrane as a helical segment. The Cytoplasmic segment spans residues 59-70 (TLEHKKLRTPLN). The helical transmembrane segment at 71–93 (YILLNLAVADLFMVIGGFTTTMY) threads the bilayer. The Extracellular portion of the chain corresponds to 94 to 107 (TSMHGYFVLGRLGC). Cysteine 107 and cysteine 184 are disulfide-bonded. A helical membrane pass occupies residues 108–130 (NLEGFFATLGGMISLWSLAVLAI). The 'Ionic lock' involved in activated form stabilization motif lies at 131-133 (ERW). The Cytoplasmic segment spans residues 131–149 (ERWVVVCKPISNFRFGENH). A helical membrane pass occupies residues 150-170 (AIMGVSLTWGMALACTVPPLV). Residues 171-199 (GWSRYIPEGMQCSCGIDYYTRAEGFNNET) lie on the Extracellular side of the membrane. N-linked (GlcNAc...) asparagine glycosylation occurs at asparagine 197. The chain crosses the membrane as a helical span at residues 200 to 221 (FVLYMFCCHFTVPLTIIFFCYG). Topologically, residues 222–249 (RLLCAVKEAAAAQQESETTQRAEREVTR) are cytoplasmic. A helical membrane pass occupies residues 250–271 (MVVIMVIGFLVCWLPYASVAWF). At 272-283 (VFTHQGSEFGPL) the chain is on the extracellular side. The helical transmembrane segment at 284 to 305 (FMTIPAFFAKSSAIYNPMIYIC) threads the bilayer. Lysine 293 is subject to N6-(retinylidene)lysine. The Cytoplasmic portion of the chain corresponds to 306–348 (MNKQFRHCMITTLFCGKNPFEGEEEGASSTKTEASSASSVSPA). The S-palmitoyl cysteine moiety is linked to residue cysteine 320. Residues 327–348 (GEEEGASSTKTEASSASSVSPA) form a disordered region. A compositionally biased stretch (low complexity) spans 332-348 (ASSTKTEASSASSVSPA).

Belongs to the G-protein coupled receptor 1 family. Opsin subfamily. Phosphorylated on some or all of the serine and threonine residues present in the C-terminal region. In terms of processing, contains one covalently linked retinal chromophore.

It is found in the membrane. The protein resides in the cell projection. It localises to the cilium. The protein localises to the photoreceptor outer segment. Its function is as follows. Photoreceptor required for image-forming vision at low light intensity. While most salt water fish species use retinal as chromophore, most freshwater fish use 3-dehydroretinal, or a mixture of retinal and 3-dehydroretinal. Light-induced isomerization of 11-cis to all-trans retinal triggers a conformational change that activates signaling via G-proteins. Subsequent receptor phosphorylation mediates displacement of the bound G-protein alpha subunit by arrestin and terminates signaling. This chain is Rhodopsin (rho), found in Sargocentron xantherythrum (Hawaiian squirrelfish).